A 96-amino-acid chain; its full sequence is Large ribosomal subunit protein uL23 (96 aa).

It belongs to the universal ribosomal protein uL23 family. As to quaternary structure, part of the 50S ribosomal subunit. Contacts protein L29, and trigger factor when it is bound to the ribosome.

One of the early assembly proteins it binds 23S rRNA. One of the proteins that surrounds the polypeptide exit tunnel on the outside of the ribosome. Forms the main docking site for trigger factor binding to the ribosome. This Endomicrobium trichonymphae protein is Large ribosomal subunit protein uL23.